A 187-amino-acid polypeptide reads, in one-letter code: Probable chorismate pyruvate-lyase (187 aa).

Residues Arg-81, Leu-119, and Glu-178 each contribute to the substrate site.

This sequence belongs to the UbiC family.

Its subcellular location is the cytoplasm. The enzyme catalyses chorismate = 4-hydroxybenzoate + pyruvate. Its pathway is cofactor biosynthesis; ubiquinone biosynthesis. Its function is as follows. Removes the pyruvyl group from chorismate, with concomitant aromatization of the ring, to provide 4-hydroxybenzoate (4HB) for the ubiquinone pathway. This Thiobacillus denitrificans (strain ATCC 25259 / T1) protein is Probable chorismate pyruvate-lyase.